Here is a 141-residue protein sequence, read N- to C-terminus: Nucleoside diphosphate kinase (141 aa).

ATP contacts are provided by lysine 11, phenylalanine 59, arginine 87, threonine 93, arginine 104, and asparagine 114. The active-site Pros-phosphohistidine intermediate is histidine 117.

Belongs to the NDK family. As to quaternary structure, homotetramer. The cofactor is Mg(2+).

It is found in the cytoplasm. The enzyme catalyses a 2'-deoxyribonucleoside 5'-diphosphate + ATP = a 2'-deoxyribonucleoside 5'-triphosphate + ADP. The catalysed reaction is a ribonucleoside 5'-diphosphate + ATP = a ribonucleoside 5'-triphosphate + ADP. Its function is as follows. Major role in the synthesis of nucleoside triphosphates other than ATP. The ATP gamma phosphate is transferred to the NDP beta phosphate via a ping-pong mechanism, using a phosphorylated active-site intermediate. This Legionella pneumophila subsp. pneumophila (strain Philadelphia 1 / ATCC 33152 / DSM 7513) protein is Nucleoside diphosphate kinase.